The primary structure comprises 972 residues: Fibroblast growth factor receptor (972 aa).

Positions Met1–Ala43 are cleaved as a signal peptide. The Extracellular segment spans residues Gly44 to Gln547. The region spanning Ala57–Ile152 is the Fibronectin type-III domain. Asn109, Asn121, Asn191, Asn203, Asn239, Asn272, Asn315, Asn390, Asn398, Asn419, Asn422, and Asn460 each carry an N-linked (GlcNAc...) asparagine glycan. The region spanning Pro150–Leu242 is the Ig-like C2-type 1 domain. An intrachain disulfide couples Cys176 to Cys226. Ig-like C2-type domains follow at residues Pro282–Lys374 and Pro383–Asp517. Cys306 and Cys358 are disulfide-bonded. A disulfide bridge connects residues Cys403 and Cys501. A helical membrane pass occupies residues Leu548–Ile568. The Cytoplasmic portion of the chain corresponds to Leu569–Asn972. The Protein kinase domain occupies Leu639 to Leu925. ATP-binding positions include Ile645–Val653 and Lys673. The Proton acceptor role is filled by Asp781. Position 812 is a phosphotyrosine; by autocatalysis (Tyr812).

Belongs to the protein kinase superfamily. Tyr protein kinase family. Fibroblast growth factor receptor subfamily.

The protein localises to the membrane. It carries out the reaction L-tyrosyl-[protein] + ATP = O-phospho-L-tyrosyl-[protein] + ADP + H(+). Receptor for basic fibroblast growth factor. The polypeptide is Fibroblast growth factor receptor (FGFR) (Strongylocentrotus purpuratus (Purple sea urchin)).